A 346-amino-acid polypeptide reads, in one-letter code: Glycerol-3-phosphate dehydrogenase [NAD(P)+] (346 aa).

NADPH-binding residues include Ser-15, Trp-16, Arg-36, and Lys-110. Positions 110, 139, and 141 each coordinate sn-glycerol 3-phosphate. Ala-143 contacts NADPH. Sn-glycerol 3-phosphate is bound by residues Lys-194, Asp-247, Ser-257, Arg-258, and Asn-259. The active-site Proton acceptor is Lys-194. Residue Arg-258 participates in NADPH binding. Residues Val-282 and Glu-284 each coordinate NADPH.

This sequence belongs to the NAD-dependent glycerol-3-phosphate dehydrogenase family.

The protein localises to the cytoplasm. It carries out the reaction sn-glycerol 3-phosphate + NAD(+) = dihydroxyacetone phosphate + NADH + H(+). It catalyses the reaction sn-glycerol 3-phosphate + NADP(+) = dihydroxyacetone phosphate + NADPH + H(+). Its pathway is membrane lipid metabolism; glycerophospholipid metabolism. Functionally, catalyzes the reduction of the glycolytic intermediate dihydroxyacetone phosphate (DHAP) to sn-glycerol 3-phosphate (G3P), the key precursor for phospholipid synthesis. The protein is Glycerol-3-phosphate dehydrogenase [NAD(P)+] of Xylella fastidiosa (strain Temecula1 / ATCC 700964).